A 331-amino-acid polypeptide reads, in one-letter code: 6-phosphogluconolactonase (331 aa).

The protein belongs to the cycloisomerase 2 family.

The enzyme catalyses 6-phospho-D-glucono-1,5-lactone + H2O = 6-phospho-D-gluconate + H(+). It functions in the pathway carbohydrate degradation; pentose phosphate pathway; D-ribulose 5-phosphate from D-glucose 6-phosphate (oxidative stage): step 2/3. Catalyzes the hydrolysis of 6-phosphogluconolactone to 6-phosphogluconate. This chain is 6-phosphogluconolactonase, found in Klebsiella pneumoniae subsp. pneumoniae (strain ATCC 700721 / MGH 78578).